Here is a 467-residue protein sequence, read N- to C-terminus: MLEKISDTLTFECETGNYHTFCPISCVAWLYQKIEDSFFLVVGTKTCGYFLQNALGVMIFAEPRYAMAELEEGDISAQLNDYEELKRLCIQIKKDRNPSVIVWIGTCTTEIIKMDLEGMAPKLEAEIGIPIVVARANGLDYAFTQGEDTVLAAIVHRCPDYKLQNKTDLTDNDIQEDATRFSFLKLRKNNIRSISATNSHPPLVLFGSLPTTVSSQLNLELKRNQIEVSGWLPTQRYTDLPSLGEGVYVCGVNPFLSRTATTLMRRKKCKLISAPFPIGPDGTRAWIEKICNVFNIQPTGLEERENKIWDGLEDYLDLVRGKSVFFMGDNLLEISLARFLIRCGMIVYEIGIPYMDKRYQAAELMLLQKTCEMMNVPLPRIVEKPDNYNQIQRIRELKPDLAITGMAHANPLEARGISTKWSVEFTFAQIHGFTNARDILELVTRPLRRNQSLHELGWNNLVKVNSQ.

Residues cysteine 22, cysteine 47, and cysteine 107 each coordinate [4Fe-4S] cluster.

Belongs to the BchN/ChlN family. In terms of assembly, protochlorophyllide reductase is composed of three subunits; ChlL, ChlN and ChlB. Forms a heterotetramer of two ChlB and two ChlN subunits. It depends on [4Fe-4S] cluster as a cofactor.

The protein localises to the plastid. It localises to the chloroplast. It carries out the reaction chlorophyllide a + oxidized 2[4Fe-4S]-[ferredoxin] + 2 ADP + 2 phosphate = protochlorophyllide a + reduced 2[4Fe-4S]-[ferredoxin] + 2 ATP + 2 H2O. Its pathway is porphyrin-containing compound metabolism; chlorophyll biosynthesis (light-independent). Its function is as follows. Component of the dark-operative protochlorophyllide reductase (DPOR) that uses Mg-ATP and reduced ferredoxin to reduce ring D of protochlorophyllide (Pchlide) to form chlorophyllide a (Chlide). This reaction is light-independent. The NB-protein (ChlN-ChlB) is the catalytic component of the complex. The polypeptide is Light-independent protochlorophyllide reductase subunit N (Chara vulgaris (Common stonewort)).